The sequence spans 157 residues: Phosphopantetheine adenylyltransferase (157 aa).

This sequence belongs to the eukaryotic CoaD family. As to quaternary structure, monomer.

Its subcellular location is the cytoplasm. The enzyme catalyses (R)-4'-phosphopantetheine + ATP + H(+) = 3'-dephospho-CoA + diphosphate. Its pathway is cofactor biosynthesis; coenzyme A biosynthesis. In terms of biological role, reversibly transfers an adenylyl group from ATP to 4'-phosphopantetheine, yielding dephospho-CoA (dPCoA) and pyrophosphate. This chain is Phosphopantetheine adenylyltransferase, found in Pyrococcus abyssi (strain GE5 / Orsay).